The following is a 424-amino-acid chain: C4-dicarboxylate transport protein (424 aa).

Helical transmembrane passes span serine 4–glycine 24, leucine 44–methionine 64, valine 76–valine 96, isoleucine 142–phenylalanine 162, valine 184–phenylalanine 206, leucine 222–alanine 242, isoleucine 326–valine 346, and isoleucine 352–isoleucine 372.

Belongs to the dicarboxylate/amino acid:cation symporter (DAACS) (TC 2.A.23) family.

Its subcellular location is the cell inner membrane. Functionally, responsible for the transport of dicarboxylates such as succinate, fumarate, and malate from the periplasm across the membrane. This Erwinia tasmaniensis (strain DSM 17950 / CFBP 7177 / CIP 109463 / NCPPB 4357 / Et1/99) protein is C4-dicarboxylate transport protein.